Here is a 264-residue protein sequence, read N- to C-terminus: Isoprenyl transferase (264 aa).

Asp43 is an active-site residue. Asp43 serves as a coordination point for Mg(2+). Substrate contacts are provided by residues 44-47 (GNGR), Trp48, Arg56, His60, and 88-90 (STE). Asn91 serves as the catalytic Proton acceptor. Substrate contacts are provided by residues Trp92, Arg94, Arg211, and 217–219 (RTS). Glu230 contacts Mg(2+).

Belongs to the UPP synthase family. Homodimer. It depends on Mg(2+) as a cofactor.

Functionally, catalyzes the condensation of isopentenyl diphosphate (IPP) with allylic pyrophosphates generating different type of terpenoids. This is Isoprenyl transferase from Bifidobacterium longum (strain NCC 2705).